The following is a 530-amino-acid chain: Pyridoxine/pyridoxamine 5'-phosphate oxidase 1, chloroplastic (530 aa).

A chloroplast-targeting transit peptide spans Met-1–Asn-64. Position 65 is an N-acetylmethionine (Met-65). One can recognise a YjeF N-terminal domain in the interval Ala-81–Leu-297. Asn-131–Asp-135 provides a ligand contact to (6S)-NADPHX. K(+) contacts are provided by Asn-132 and Asp-196. (6S)-NADPHX-binding positions include Gly-200–Ala-206 and Asp-238. Residue Ser-241 coordinates K(+). Glu-247–His-250 lines the pyridoxal 5'-phosphate pocket. A substrate-binding site is contributed by Arg-321–Tyr-324. Residue Val-325–Pro-327 coordinates pyridoxal 5'-phosphate. Arg-374 to Leu-377 is an FMN binding site. Lys-379 is a binding site for pyridoxal 5'-phosphate. FMN is bound by residues Phe-389 to Thr-390, Lys-395 to Lys-396, and Gln-418. Positions 436, 440, and 444 each coordinate pyridoxal 5'-phosphate. Residues Gln-453 to Ser-454 and Trp-499 each bind FMN. Arg-505–His-507 lines the pyridoxal 5'-phosphate pocket. Arg-509 provides a ligand contact to FMN.

This sequence in the N-terminal section; belongs to the NnrE/AIBP family. In the C-terminal section; belongs to the pyridoxamine 5'-phosphate oxidase family. In terms of assembly, homodimer. It depends on FMN as a cofactor. The cofactor is K(+). Expressed in leaves, stems, flowers and roots.

Its subcellular location is the plastid. It is found in the chloroplast. It carries out the reaction pyridoxamine 5'-phosphate + O2 + H2O = pyridoxal 5'-phosphate + H2O2 + NH4(+). The catalysed reaction is pyridoxine 5'-phosphate + O2 = pyridoxal 5'-phosphate + H2O2. The enzyme catalyses (6R)-NADHX = (6S)-NADHX. It catalyses the reaction (6R)-NADPHX = (6S)-NADPHX. It participates in cofactor metabolism; pyridoxal 5'-phosphate salvage; pyridoxal 5'-phosphate from pyridoxamine 5'-phosphate: step 1/1. The protein operates within cofactor metabolism; pyridoxal 5'-phosphate salvage; pyridoxal 5'-phosphate from pyridoxine 5'-phosphate: step 1/1. Catalyzes the oxidation of either pyridoxine 5'-phosphate (PNP) or pyridoxamine 5'-phosphate (PMP) into pyridoxal 5'-phosphate (PLP). Involved in the PLP salvage pathway. Has a higher preference for PNP over PMP. May also catalyze the epimerization of the S- and R-forms of NAD(P)HX, a damaged form of NAD(P)H that is a result of enzymatic or heat-dependent hydration. This is a prerequisite for the S-specific NAD(P)H-hydrate dehydratase to allow the repair of both epimers of NAD(P)HX. The sequence is that of Pyridoxine/pyridoxamine 5'-phosphate oxidase 1, chloroplastic (PPOX1) from Arabidopsis thaliana (Mouse-ear cress).